We begin with the raw amino-acid sequence, 473 residues long: MYTYMEYLQKCLYKSTNWNEDNIYSNITATSQALLDFPIPNGFKIDSSSKTTDYSASSFTLSNHHQINGSLAYLYSSIPLTNTMGTKDVSLQDAIAGFRIIEPSVGLRSKLKNNIMSNRSSLLYGRMYFPGSALEAMIIKRLTKNSQLLIKCVNNPHLEKNGTMIVYLQNNTAKYSRELIYSTNEALIGLRCLYNLGDATSHNFTNINPAVIPKFDNSVVSIGTEIWYAARTMSPGLSAALRYSTRSTSTGKPLTMTLAINPIVGHVSSTYTVKTSVASTFCSKYDFNVFSYASNLSLGFELYSYANKKKNSFPSFEHHEIHSSSEENKYLKKHPELQRHHNLHHNLHHQRVPIKSHKYEGNRTIINPIQNLDNVYHINPTLLSSNGSTSTTTNNENTNTSETVTAAFQNLVNESDFSSVFKFSTSLNDKVVKILWEGRLKEFLVSTGVKLSLNPITNTPEFNKLGISFSYAL.

Belongs to the MDM10 family. Component of the ER-mitochondria encounter structure (ERMES) or MDM complex, composed of MMM1, MDM10, MDM12 and MDM34. Associates with the mitochondrial outer membrane sorting assembly machinery SAM(core) complex.

It localises to the mitochondrion outer membrane. Component of the ERMES/MDM complex, which serves as a molecular tether to connect the endoplasmic reticulum and mitochondria. Components of this complex are involved in the control of mitochondrial shape and protein biogenesis and may function in phospholipid exchange. MDM10 is involved in the late assembly steps of the general translocase of the mitochondrial outer membrane (TOM complex). Functions in the TOM40-specific route of the assembly of outer membrane beta-barrel proteins, including the association of TOM40 with the receptor TOM22 and small TOM proteins. Can associate with the SAM(core) complex as well as the MDM12-MMM1 complex, both involved in late steps of the major beta-barrel assembly pathway, that is responsible for biogenesis of all outer membrane beta-barrel proteins. May act as a switch that shuttles between both complexes and channels precursor proteins into the TOM40-specific pathway. Plays a role in mitochondrial morphology and in the inheritance of mitochondria. The protein is Mitochondrial distribution and morphology protein 10 of Candida albicans (strain WO-1) (Yeast).